The following is a 431-amino-acid chain: Adenylosuccinate lyase (431 aa).

N(6)-(1,2-dicarboxyethyl)-AMP contacts are provided by residues 4–5 (RY), 67–69 (RHD), and 93–94 (TS). Residue H141 is the Proton donor/acceptor of the active site. Q212 lines the N(6)-(1,2-dicarboxyethyl)-AMP pocket. The active-site Proton donor/acceptor is the S262. Residues S263, 268–270 (KRN), N276, and 307–311 (SAERI) contribute to the N(6)-(1,2-dicarboxyethyl)-AMP site.

It belongs to the lyase 1 family. Adenylosuccinate lyase subfamily. Homodimer and homotetramer. Residues from neighboring subunits contribute catalytic and substrate-binding residues to each active site.

It carries out the reaction N(6)-(1,2-dicarboxyethyl)-AMP = fumarate + AMP. The enzyme catalyses (2S)-2-[5-amino-1-(5-phospho-beta-D-ribosyl)imidazole-4-carboxamido]succinate = 5-amino-1-(5-phospho-beta-D-ribosyl)imidazole-4-carboxamide + fumarate. It participates in purine metabolism; AMP biosynthesis via de novo pathway; AMP from IMP: step 2/2. The protein operates within purine metabolism; IMP biosynthesis via de novo pathway; 5-amino-1-(5-phospho-D-ribosyl)imidazole-4-carboxamide from 5-amino-1-(5-phospho-D-ribosyl)imidazole-4-carboxylate: step 2/2. Its function is as follows. Catalyzes two reactions in de novo purine nucleotide biosynthesis. Catalyzes the breakdown of 5-aminoimidazole- (N-succinylocarboxamide) ribotide (SAICAR or 2-[5-amino-1-(5-phospho-beta-D-ribosyl)imidazole-4-carboxamido]succinate) to 5-aminoimidazole-4-carboxamide ribotide (AICAR or 5-amino-1-(5-phospho-beta-D-ribosyl)imidazole-4-carboxamide) and fumarate, and of adenylosuccinate (ADS or N(6)-(1,2-dicarboxyethyl)-AMP) to adenosine monophosphate (AMP) and fumarate. This is Adenylosuccinate lyase (purB) from Staphylococcus saprophyticus subsp. saprophyticus (strain ATCC 15305 / DSM 20229 / NCIMB 8711 / NCTC 7292 / S-41).